We begin with the raw amino-acid sequence, 445 residues long: Phosphoglucosamine mutase (445 aa).

The active-site Phosphoserine intermediate is the S100. The Mg(2+) site is built by S100, D240, D242, and D244. Phosphoserine is present on S100.

It belongs to the phosphohexose mutase family. The cofactor is Mg(2+). Post-translationally, activated by phosphorylation.

It catalyses the reaction alpha-D-glucosamine 1-phosphate = D-glucosamine 6-phosphate. Catalyzes the conversion of glucosamine-6-phosphate to glucosamine-1-phosphate. The chain is Phosphoglucosamine mutase from Pelotomaculum thermopropionicum (strain DSM 13744 / JCM 10971 / SI).